A 431-amino-acid polypeptide reads, in one-letter code: MYRFAPSPTGDMHIGNLRAAIFNYICARQKNMDFILRIEDTDKARNIAGKEEEIKEILNLFGISWQHYYIQSENLKFHRQMALKLVSEKKAFACFCTEEELEAKKELAKKQGKAYRYDGTCEKLADIDVLECEKPFVIRLKKPTHTMKFTDFIKGELSFEPENIDSFVIMRTDKTPTYNFACAVDDMLENVTCIIRGEDHVSNTPKQEHIRASLGYNKAMTYAHLPIILNEEGVKMSKREAHSSVKWLLESGILPSAIANYLIMLGNKTPCEIFTLEEAIKWFDISKVSKAPARFDLKKLLQINREHIKMIKDDELNKILDLNKDLAQLAKFYTQEASTIKELKEKMRAIFNTKDFGEFETECKILKELLKDIELFENYEDFKNELLSKSDLKGKKFFMPLRIILTGNIHGPELSDLYPYIKNFIHELARI.

A 'HIGH' region motif is present at residues 6–16 (PSPTGDMHIGN). Residues 235–239 (KMSKR) carry the 'KMSKS' region motif. ATP is bound at residue K238.

The protein belongs to the class-I aminoacyl-tRNA synthetase family. Glutamate--tRNA ligase type 1 subfamily. Monomer.

It is found in the cytoplasm. It carries out the reaction tRNA(Glu) + L-glutamate + ATP = L-glutamyl-tRNA(Glu) + AMP + diphosphate. Catalyzes the attachment of glutamate to tRNA(Glu) in a two-step reaction: glutamate is first activated by ATP to form Glu-AMP and then transferred to the acceptor end of tRNA(Glu). This chain is Glutamate--tRNA ligase 1, found in Campylobacter jejuni subsp. jejuni serotype O:23/36 (strain 81-176).